Here is a 21-residue protein sequence, read N- to C-terminus: Peptide PGLa-R4 (21 aa).

Position 21 is a leucine amide (L21).

As to expression, expressed by the skin glands.

Its subcellular location is the secreted. Antimicrobial peptide. This Xenopus ruwenzoriensis (Uganda clawed frog) protein is Peptide PGLa-R4.